Consider the following 551-residue polypeptide: Glucose-6-phosphate isomerase (551 aa).

Glutamate 349 acts as the Proton donor in catalysis. Residues histidine 378 and lysine 480 contribute to the active site.

The protein belongs to the GPI family.

The protein resides in the cytoplasm. It catalyses the reaction alpha-D-glucose 6-phosphate = beta-D-fructose 6-phosphate. Its pathway is carbohydrate biosynthesis; gluconeogenesis. It functions in the pathway carbohydrate degradation; glycolysis; D-glyceraldehyde 3-phosphate and glycerone phosphate from D-glucose: step 2/4. In terms of biological role, catalyzes the reversible isomerization of glucose-6-phosphate to fructose-6-phosphate. In Prochlorococcus marinus (strain MIT 9313), this protein is Glucose-6-phosphate isomerase.